The chain runs to 315 residues: Acetaldehyde dehydrogenase 2 (315 aa).

Residue 11–14 (SGNI) coordinates NAD(+). C129 acts as the Acyl-thioester intermediate in catalysis. NAD(+) is bound by residues 160-168 (SAGPGTRSN) and N290.

The protein belongs to the acetaldehyde dehydrogenase family.

The enzyme catalyses acetaldehyde + NAD(+) + CoA = acetyl-CoA + NADH + H(+). In Mycobacterium sp. (strain KMS), this protein is Acetaldehyde dehydrogenase 2.